The sequence spans 117 residues: Ig heavy chain V region 3 (117 aa).

A signal peptide spans 1–19 (MGWSCIILFLVATATGVHS). A framework-1 region spans residues 20-49 (QVQLQQPGAELVRPGSSVKLSCKASGYTFT). A disulfide bridge connects residues Cys-41 and Cys-115. The segment at 50–54 (SYWMD) is complementarity-determining-1. The interval 55-68 (WVKQRPGQGLEWIG) is framework-2. Positions 69-85 (NIYPSDSETHYNQKFKD) are complementarity-determining-2. Residues 86 to 117 (KATLTVDKSSSTAYMQLSSLTSEDSAVYYCAR) form a framework-3 region.

This is Ig heavy chain V region 3 (Ighv1-61) from Mus musculus (Mouse).